The chain runs to 373 residues: Transaminase AMT5 (373 aa).

Arginine 92 contributes to the pyridoxal 5'-phosphate binding site. Lysine 196 is subject to N6-(pyridoxal phosphate)lysine. Residue glutamate 232 participates in pyridoxal 5'-phosphate binding.

It belongs to the class-IV pyridoxal-phosphate-dependent aminotransferase family. Pyridoxal 5'-phosphate is required as a cofactor.

It functions in the pathway mycotoxin biosynthesis. Transaminase; part of the gene clusters that mediate the biosynthesis of AM-toxins, host-selective toxins (HSTs) causing Alternaria blotch on apple, a worldwide distributed disease. AM-toxins are cyclic depsipeptides containing the 3 residues 2-hydroxy-isovaleric acid (2-HIV), dehydroalanine, L-alanine which are common for all 3 AM-toxins I to III. The fourth precursor is L-alpha-amino-methoxyphenyl-valeric acid (L-Amv) for AM-toxin I, L-alpha-amino-phenyl-valeric acid (L-Apv) for AM-toxin II, and L-alpha-amino-hydroxyphenyl-valeric acid (L-Ahv) for AM-toxin III. AM-toxins have two target sites for affecting susceptible apple cells; they cause invagination of the plasma membrane and electrolyte loss and chloroplast disorganization. The non-ribosomal peptide synthetase AMT1 contains 4 catalytic modules and is responsible for activation of each residue in AM-toxin. The aldo-keto reductase AMT2 catalyzes the conversion of 2-keto-isovaleric acid (2-KIV) to 2-hydroxy-isovaleric acid (2-HIV), one of the precursor residues incorporated by AMT1 during AM-toxin biosynthesis, by reduction of its ketone to an alcohol. The cytochrome P450 monooxygenase AMT3 and the thioesterase AMT4 are also important for AM-toxin production, but their exact function within the AM-toxin biosynthesis are not known yet. Up to 21 proteins (including AMT1 to AMT4) are predicted to be involved in AM-toxin biosynthesis since their expression is highly up-regulated in AM-toxin-producing cultures. This chain is Transaminase AMT5, found in Alternaria alternata (Alternaria rot fungus).